Reading from the N-terminus, the 250-residue chain is U6 snRNA phosphodiesterase 1 (250 aa).

A disordered region spans residues Met-1–Thr-31. Residues Arg-22–Thr-31 show a composition bias toward pro residues. The active-site Proton acceptor is the His-105. His-105–Ser-107 contacts AMP. UMP-binding positions include Gln-149, Tyr-187, and Ser-191–Ser-195. Residues Tyr-187 and Glu-189–Ser-195 each bind AMP. His-193 (proton donor) is an active-site residue.

This sequence belongs to the 2H phosphoesterase superfamily. USB1 family.

The protein localises to the nucleus. The enzyme catalyses a 3'-end uridylyl-uridine-RNA = a 3'-end 2',3'-cyclophospho-uridine-RNA + uridine. It carries out the reaction a 3'-end uridylyl-adenosine-RNA = a 3'-end 2',3'-cyclophospho-uridine-RNA + adenosine. In terms of biological role, 3'-5' RNA exonuclease that trims the 3' end of oligo(U) and oligo(A) tracts of the pre-U6 small nuclear RNA (snRNA) molecule, leading to the formation of a mature U6 snRNA 3' end-terminated with a 2',3'-cyclic phosphate. Participates in the U6 snRNA 3' end processing that prevents U6 snRNA degradation. In addition also removes uridines from the 3' end of U6atac snRNA and possibly the vault RNA VTRNA1-1. This is U6 snRNA phosphodiesterase 1 from Xenopus laevis (African clawed frog).